The following is a 473-amino-acid chain: 1-deoxy-D-xylulose 5-phosphate reductoisomerase, chloroplastic (473 aa).

Residues 1–49 constitute a chloroplast transit peptide; it reads MALKVVSFPGDLAAVSFLDSNRGGAFNQLKVDLPFQTRDRRAVSLRRTC. Positions 85, 86, 87, 88, 111, 113, and 199 each coordinate NADPH. Lysine 200 is a binding site for 1-deoxy-D-xylulose 5-phosphate. An NADPH-binding site is contributed by glutamate 201. Residue aspartate 225 coordinates Mn(2+). The 1-deoxy-D-xylulose 5-phosphate site is built by serine 226, glutamate 227, serine 251, and histidine 274. Glutamate 227 contacts Mn(2+). Glycine 280 is an NADPH binding site. 1-deoxy-D-xylulose 5-phosphate contacts are provided by serine 287, asparagine 292, lysine 293, and glutamate 296. Glutamate 296 serves as a coordination point for Mn(2+).

This sequence belongs to the DXR family. Mn(2+) serves as cofactor. Mg(2+) is required as a cofactor.

The protein localises to the plastid. The protein resides in the chloroplast stroma. It catalyses the reaction 2-C-methyl-D-erythritol 4-phosphate + NADP(+) = 1-deoxy-D-xylulose 5-phosphate + NADPH + H(+). It participates in isoprenoid biosynthesis; isopentenyl diphosphate biosynthesis via DXP pathway; isopentenyl diphosphate from 1-deoxy-D-xylulose 5-phosphate: step 1/6. Functionally, enzyme of the plastid non-mevalonate pathway for isoprenoid biosynthesis that catalyzes the NADPH-dependent rearrangement and reduction of 1-deoxy-D-xylulose-5-phosphate (DXP) to 2-C-methyl-D-erythritol 4-phosphate (MEP). Required for chloroplast development. The protein is 1-deoxy-D-xylulose 5-phosphate reductoisomerase, chloroplastic (DXR) of Oryza sativa subsp. japonica (Rice).